The primary structure comprises 1377 residues: DNA-directed RNA polymerase subunit beta (1377 aa).

The protein belongs to the RNA polymerase beta chain family. In terms of assembly, the RNAP catalytic core consists of 2 alpha, 1 beta, 1 beta' and 1 omega subunit. When a sigma factor is associated with the core the holoenzyme is formed, which can initiate transcription.

The enzyme catalyses RNA(n) + a ribonucleoside 5'-triphosphate = RNA(n+1) + diphosphate. Functionally, DNA-dependent RNA polymerase catalyzes the transcription of DNA into RNA using the four ribonucleoside triphosphates as substrates. This Azoarcus sp. (strain BH72) protein is DNA-directed RNA polymerase subunit beta.